A 504-amino-acid polypeptide reads, in one-letter code: Maturase K (504 aa).

The protein belongs to the intron maturase 2 family. MatK subfamily.

It is found in the plastid. It localises to the chloroplast. Usually encoded in the trnK tRNA gene intron. Probably assists in splicing its own and other chloroplast group II introns. The polypeptide is Maturase K (Taxus baccata (English yew)).